Consider the following 253-residue polypeptide: Molybdate import ATP-binding protein MolC (253 aa).

Positions 5–229 constitute an ABC transporter domain; sequence LSVENLGFYY…NLTALFHLPM (225 aa). 38-45 is a binding site for ATP; sequence GQNGCGKS.

Belongs to the ABC transporter superfamily. The complex is composed of two ATP-binding proteins (MolC), two transmembrane proteins (MolB) and a solute-binding protein (MolA).

The protein localises to the cell inner membrane. The catalysed reaction is molybdate(out) + ATP + H2O = molybdate(in) + ADP + phosphate + H(+). With respect to regulation, the MolBCA complex shows a decrease in affinity in the presence of increasing concentrations of substrate and nucleotide. Functionally, part of the ABC transporter complex MolBCA involved in molybdate import. Responsible for energy coupling to the transport system. Functions as a low-affinity molybdate transporter. In Haemophilus influenzae (strain ATCC 51907 / DSM 11121 / KW20 / Rd), this protein is Molybdate import ATP-binding protein MolC.